The chain runs to 268 residues: Satratoxin biosynthesis SC1 cluster protein 4 (268 aa).

Helical transmembrane passes span V34–F54, L78–I98, H113–V133, and A145–Y165.

This sequence belongs to the SAT4 family.

It is found in the membrane. It participates in mycotoxin biosynthesis. Its function is as follows. Part of the satratoxin SC1 cluster involved in the biosynthesis of satratoxins, trichothecene mycotoxins that are associated with human food poisonings. Satratoxins are suggested to be made by products of multiple gene clusters (SC1, SC2 and SC3) that encode 21 proteins in all, including polyketide synthases, acetyltransferases, and other enzymes expected to modify the trichothecene skeleton. SC1 encodes 10 proteins, SAT1 to SAT10. The largest are SAT8, which encodes a putative polyketide synthase (PKS) with a conventional non-reducing architecture, and SAT10, a putative protein containing four ankyrin repeats and thus may be involved in protein scaffolding. The putative short-chain reductase SAT3 may assist the PKS in some capacity. SAT6 contains a secretory lipase domain and acts probably as a trichothecene esterase. SAT5 encodes a putative acetyltransferase, and so, with SAT6, may affect endogenous protection from toxicity. The probable transcription factor SAT9 may regulate the expression of the SC1 cluster. SC2 encodes proteins SAT11 to SAT16, the largest of which encodes the putative reducing PKS SAT13. SAT11 is a cytochrome P450 monooxygenase, while SAT14 and SAT16 are probable acetyltransferases. The SC2 cluster may be regulated by the transcription factor SAT15. SC3 is a small cluster that encodes 5 proteins, SAT17 to SAT21. SAT21 is a putative MFS-type transporter which may have a role in exporting secondary metabolites. The four other proteins putatively encoded in SC3 include the taurine hydroxylase-like protein SAT17, the O-methyltransferase SAT18, the acetyltransferase SAT19, and the Cys6-type zinc finger SAT20, the latter being probably involved in regulation of SC3 expression. The chain is Satratoxin biosynthesis SC1 cluster protein 4 from Stachybotrys chartarum (strain CBS 109288 / IBT 7711) (Toxic black mold).